The following is a 55-amino-acid chain: UPF0434 protein BPEN_388 (55 aa).

The protein belongs to the UPF0434 family.

The chain is UPF0434 protein BPEN_388 from Blochmanniella pennsylvanica (strain BPEN).